Here is a 369-residue protein sequence, read N- to C-terminus: Chorismate synthase (369 aa).

NADP(+)-binding residues include Arg48 and Arg54. FMN is bound by residues 125–127, 238–239, Gly278, 293–297, and Arg319; these read RSS, NA, and KPTSS.

It belongs to the chorismate synthase family. As to quaternary structure, homotetramer. The cofactor is FMNH2.

It carries out the reaction 5-O-(1-carboxyvinyl)-3-phosphoshikimate = chorismate + phosphate. It participates in metabolic intermediate biosynthesis; chorismate biosynthesis; chorismate from D-erythrose 4-phosphate and phosphoenolpyruvate: step 7/7. In terms of biological role, catalyzes the anti-1,4-elimination of the C-3 phosphate and the C-6 proR hydrogen from 5-enolpyruvylshikimate-3-phosphate (EPSP) to yield chorismate, which is the branch point compound that serves as the starting substrate for the three terminal pathways of aromatic amino acid biosynthesis. This reaction introduces a second double bond into the aromatic ring system. The sequence is that of Chorismate synthase from Burkholderia pseudomallei (strain 1106a).